A 580-amino-acid chain; its full sequence is Serine/threonine-protein kinase PINK1, mitochondrial (580 aa).

A mitochondrion-targeting transit peptide spans 1–77; the sequence is MAVRQALGRG…RFFRQSVAGL (77 aa). The disordered stretch occupies residues 28 to 60; sequence VSGWGKPGPGAAWGRGERPGRVSSPGAQPRPLG. Residues 94–110 traverse the membrane as a helical segment; the sequence is GPCGRAVFLAFGLGLGL. A required for outer membrane localization region spans residues 111-117; sequence IEEKQAE. The Protein kinase domain occupies 156-510; the sequence is YLIGQAIGKG…IAANVLHLSL (355 aa). ATP-binding positions include 162–170 and Lys-218; that span reads IGKGCNAAV. A Phosphoserine; by autocatalysis modification is found at Ser-227. Catalysis depends on Asp-361, which acts as the Proton acceptor. Ser-401 is modified (phosphoserine; by autocatalysis).

It belongs to the protein kinase superfamily. Ser/Thr protein kinase family. In terms of assembly, upon mitochondrial depolarization, it forms a supercomplex with TOM and TIM23 complexes. PINK1-TOM-TIM23 supercomplex formation requires PINK1 interaction with TOMM20 and TOMM70 and is critical for PINK1 stabilization at the outer mitochondrial membrane, kinase activation and downstream mitophagy. Upon mitochondrial depolarization, interacts with TIMM23; the interaction is required for PINK1 accumulation at the outer mitochondrial membrane, kinase activation by autophosphorylation and PRKN recruitement to mitochondria. Interacts with PRKN. Interacts with FBXO7. Forms a complex with PRKN and PARK7. Interacts with NENF. Mg(2+) is required as a cofactor. Post-translationally, proteolytically cleaved. In healthy cells, the precursor is continuously imported into the inner mitochondrial membrane (IMM), where it is proteolytically cleaved by mitochondrial-processing peptidase (MPP) and then undergoes further proteolytic cleavage by PARL or AFG3L2 to give rise to the 52 kDa short form. The 52 kDa short form is then released into the cytosol where it rapidly undergoes proteasome-dependent degradation. In unhealthy cells, when cellular stress conditions lead to the loss of mitochondrial membrane potential, mitochondrial import is impaired leading to the precursor accumulating on the outer mitochondrial membrane (OMM). If accumulation at the OMM fails and it is imported into the depolarized mitochondria, it undergoes cleavage by the IMM protease OMA1, promoting its subsequent degradation by the proteasome. In terms of processing, autophosphorylated. Loss of mitochondrial membrane potential results in the precursor accumulating on the outer mitochondrial membrane (OMM) where it is activated by autophosphorylation. Autophosphorylation at Ser-227 and Ser-401 is sufficient and essential for selective recruitment of PRKN to depolarized mitochondria, via PINK1-dependent phosphorylation of ubiquitin and maybe PRKN.

It localises to the mitochondrion outer membrane. The protein localises to the mitochondrion inner membrane. It is found in the cytoplasm. Its subcellular location is the cytosol. The enzyme catalyses L-seryl-[protein] + ATP = O-phospho-L-seryl-[protein] + ADP + H(+). It catalyses the reaction L-threonyl-[protein] + ATP = O-phospho-L-threonyl-[protein] + ADP + H(+). In terms of biological role, serine/threonine-protein kinase which acts as a sensor of mitochondrial damage and protects against mitochondrial dysfunction during cellular stress. It phosphorylates mitochondrial proteins to coordinate mitochondrial quality control mechanisms that remove and replace dysfunctional mitochondrial components. Depending on the severity of mitochondrial damage, activity ranges from preventing apoptosis and stimulating mitochondrial biogenesis to eliminating severely damaged mitochondria via PINK1-PRKN-dependent mitophagy. When cellular stress results in irreversible mitochondrial damage, PINK1 accumulates at the outer mitochondrial membrane (OMM) where it phosphorylates pre-existing polyubiquitin chains at 'Ser-65', recruits PRKN from the cytosol to the OMM and activates PRKN by phosphorylation at 'Ser-65'; activated PRKN then ubiquinates VDAC1 and other OMM proteins to initiate mitophagy. The PINK1-PRKN pathway also promotes fission of damaged mitochondria through phosphorylation and PRKN-dependent degradation of mitochondrial proteins involved in fission such as MFN2. This prevents the refusion of unhealthy mitochondria with the mitochondrial network or initiates mitochondrial fragmentation facilitating their later engulfment by autophagosomes. Also promotes mitochondrial fission independently of PRKN and ATG7-mediated mitophagy, via the phosphorylation and activation of DNM1L. Regulates motility of damaged mitochondria by promoting the ubiquitination and subsequent degradation of MIRO1 and MIRO2; in motor neurons, this likely inhibits mitochondrial intracellular anterograde transport along the axons which probably increases the chance of the mitochondria undergoing mitophagy in the soma. Required for ubiquinone reduction by mitochondrial complex I by mediating phosphorylation of complex I subunit NDUFA10. Phosphorylates LETM1, positively regulating its mitochondrial calcium transport activity. The protein is Serine/threonine-protein kinase PINK1, mitochondrial of Rattus norvegicus (Rat).